The following is a 180-amino-acid chain: ATP-dependent protease subunit HslV (180 aa).

Threonine 8 is a catalytic residue. Positions 165, 168, and 171 each coordinate Na(+).

It belongs to the peptidase T1B family. HslV subfamily. A double ring-shaped homohexamer of HslV is capped on each side by a ring-shaped HslU homohexamer. The assembly of the HslU/HslV complex is dependent on binding of ATP.

Its subcellular location is the cytoplasm. The catalysed reaction is ATP-dependent cleavage of peptide bonds with broad specificity.. Allosterically activated by HslU binding. In terms of biological role, protease subunit of a proteasome-like degradation complex believed to be a general protein degrading machinery. In Halalkalibacterium halodurans (strain ATCC BAA-125 / DSM 18197 / FERM 7344 / JCM 9153 / C-125) (Bacillus halodurans), this protein is ATP-dependent protease subunit HslV.